A 421-amino-acid chain; its full sequence is UDP-N-acetylglucosamine 1-carboxyvinyltransferase (421 aa).

22-23 contributes to the phosphoenolpyruvate binding site; the sequence is KN. Arg-92 lines the UDP-N-acetyl-alpha-D-glucosamine pocket. Cys-116 functions as the Proton donor in the catalytic mechanism. Cys-116 carries the 2-(S-cysteinyl)pyruvic acid O-phosphothioketal modification. Residues 121-125, Asp-308, and Ile-330 each bind UDP-N-acetyl-alpha-D-glucosamine; that span reads RPVDQ.

The protein belongs to the EPSP synthase family. MurA subfamily.

It is found in the cytoplasm. The catalysed reaction is phosphoenolpyruvate + UDP-N-acetyl-alpha-D-glucosamine = UDP-N-acetyl-3-O-(1-carboxyvinyl)-alpha-D-glucosamine + phosphate. Its pathway is cell wall biogenesis; peptidoglycan biosynthesis. Functionally, cell wall formation. Adds enolpyruvyl to UDP-N-acetylglucosamine. The sequence is that of UDP-N-acetylglucosamine 1-carboxyvinyltransferase from Ralstonia nicotianae (strain ATCC BAA-1114 / GMI1000) (Ralstonia solanacearum).